Here is a 1455-residue protein sequence, read N- to C-terminus: Nik-related protein kinase (1455 aa).

Positions 25-313 (FSLDKAIGLG…SGNMLLHPFV (289 aa)) constitute a Protein kinase domain. ATP-binding positions include 31–39 (IGLGTYGRI) and Lys54. Asp177 acts as the Proton acceptor in catalysis. Disordered regions lie at residues 385 to 404 (LHGE…PQDQ) and 471 to 568 (TQDN…EDKE). Residues 471–480 (TQDNKATSPE) show a composition bias toward polar residues. Positions 494-505 (EALETEQPKDLD) are enriched in basic and acidic residues. Low complexity predominate over residues 520-531 (QPRQGQAAEQQQ). Positions 540-568 (PPEEDREPEQAEVQEEAVEPPQAEIEDKE) are enriched in acidic residues. The stretch at 716 to 750 (RRRHRRWEDIFNQHEEQLRRVENDREDDSSDNDEV) forms a coiled coil. Disordered stretches follow at residues 760 to 854 (IEPH…PPYS) and 1029 to 1080 (AFGN…TETS). 2 positions are modified to phosphoserine: Ser847 and Ser850. Residues 1029 to 1038 (AFGNHGANRG) are compositionally biased toward low complexity. Residues 1044–1078 (RNREANGRNEENGAFGRDQHVFPEFEHEESDRGTE) show a composition bias toward basic and acidic residues. One can recognise a CNH domain in the interval 1138-1425 (SSEVYCGSLW…RFLCARGDKM (288 aa)).

This sequence belongs to the protein kinase superfamily. STE Ser/Thr protein kinase family. STE20 subfamily.

The enzyme catalyses L-seryl-[protein] + ATP = O-phospho-L-seryl-[protein] + ADP + H(+). It catalyses the reaction L-threonyl-[protein] + ATP = O-phospho-L-threonyl-[protein] + ADP + H(+). Functionally, may phosphorylate cofilin-1 and induce actin polymerization through this process, during the late stages of embryogenesis. Involved in the TNF-alpha-induced signaling pathway. This chain is Nik-related protein kinase (Nrk), found in Mus musculus (Mouse).